A 223-amino-acid chain; its full sequence is Sigma non-opioid intracellular receptor 1 (223 aa).

Residues 1 to 9 are Lumenal-facing; the sequence is MQWAVGRRW. The segment at 2-8 is targeting to endoplasmic reticulum-associated lipid droplets; the sequence is QWAVGRR. Residues 10–30 form a helical membrane-spanning segment; the sequence is LWVALFLAAVAVLTQIVWLWL. Residues 31-223 are Cytoplasmic-facing; it reads GTQNFVFQRE…LTTYLFGQDP (193 aa). The interval 99-106 is important for ligand-binding; the sequence is SLSEYVLL. The interval 177–223 is C-terminal hydrophobic region; sequence VIPSTLGFALADTVFSTQDFLTLFYTLRVYARALQLELTTYLFGQDP.

This sequence belongs to the ERG2 family. Homotrimer. Forms a ternary complex with ANK2 and ITPR3. The complex is disrupted by agonists. Interacts with KCNA4. Interacts with KCNA2; cocaine consumption leads to increased interaction. Interacts with RNF112 in an oxidative stress-regulated manner. As to expression, ubiquitously expressed with higher expression in liver, kidney and steroid-producing tissues such as placenta, ovary and adrenal gland.

The protein resides in the nucleus inner membrane. Its subcellular location is the nucleus outer membrane. It is found in the nucleus envelope. The protein localises to the cytoplasmic vesicle. It localises to the endoplasmic reticulum membrane. The protein resides in the membrane. Its subcellular location is the lipid droplet. It is found in the cell junction. The protein localises to the cell membrane. It localises to the cell projection. The protein resides in the growth cone. Its subcellular location is the postsynaptic density membrane. In terms of biological role, functions in lipid transport from the endoplasmic reticulum and is involved in a wide array of cellular functions probably through regulation of the biogenesis of lipid microdomains at the plasma membrane. Involved in the regulation of different receptors it plays a role in BDNF signaling and EGF signaling. Also regulates ion channels like the potassium channel and could modulate neurotransmitter release. Plays a role in calcium signaling through modulation together with ANK2 of the ITP3R-dependent calcium efflux at the endoplasmic reticulum. Plays a role in several other cell functions including proliferation, survival and death. Originally identified for its ability to bind various psychoactive drugs it is involved in learning processes, memory and mood alteration. Necessary for proper mitochondrial axonal transport in motor neurons, in particular the retrograde movement of mitochondria. Plays a role in protecting cells against oxidative stress-induced cell death via its interaction with RNF112. This chain is Sigma non-opioid intracellular receptor 1 (SIGMAR1), found in Cavia porcellus (Guinea pig).